The chain runs to 297 residues: Adrenocorticotropic hormone receptor (297 aa).

The Extracellular segment spans residues 1-23 (MKHIIHASGNVNGTARNNSDCPH). N-linked (GlcNAc...) asparagine glycosylation is found at asparagine 12 and asparagine 17. 2 disulfides stabilise this stretch: cysteine 21-cysteine 253 and cysteine 245-cysteine 251. The chain crosses the membrane as a helical span at residues 24–49 (VALPEEIFFIISITGVLENLIIILAV). At 50–58 (IKNKNLQFP) the chain is on the cytoplasmic side. A helical transmembrane segment spans residues 59–79 (MYFFICSLAISDMLGSLYKIL). The Extracellular portion of the chain corresponds to 80–104 (ESILIMFRNMGYFKPHGSFETTTDD). The helical transmembrane segment at 105-126 (IIDTMFILSLLGSIFSLLAIAV) threads the bilayer. At 127–147 (DRYITIFHALQYHSIVTMHRT) the chain is on the cytoplasmic side. A helical membrane pass occupies residues 148–168 (IAVLSIIWTFCIGSGITMVLF). Residues 169–180 (SHHVPTVLTFTS) lie on the Extracellular side of the membrane. The helical transmembrane segment at 181 to 199 (LFPLMLVFILCLYVHMFLM) threads the bilayer. Residues 200 to 217 (ARSHARNISTLPRGNMRG) lie on the Cytoplasmic side of the membrane. The helical transmembrane segment at 218–244 (AITLTILLGVFIFCWAPFILHILLVTF) threads the bilayer. At 245 to 256 (CPNNPYCTCYIS) the chain is on the extracellular side. The chain crosses the membrane as a helical span at residues 257–278 (LFHVNGMLIMCNAVIDPFIYAF). Over 279 to 297 (RSPELRSAFRRMISYSKCL) the chain is Cytoplasmic. Cysteine 296 is lipidated: S-palmitoyl cysteine.

Belongs to the G-protein coupled receptor 1 family. Homodimer. Interacts with corticotropin (ACTH). Interacts with MRAP; this interaction targets MC2R to the plasma membrane. Interacts with MRAP2; competing with MRAP for binding to MC2R and impairing the binding of corticotropin (ACTH). Ubiquitinated by MGRN1 that may be involved in post-endocytic trafficking and/or degradation of internalized receptor.

Its subcellular location is the cell membrane. Hormone receptor primarily expressed in adrenal cortex that plays a key role in regulating adrenocortical function. Upon corticotropin (ACTH) binding, facilitates the release of adrenal glucocorticoids, including cortisol and corticosterone. In addition, MC2R is required for fetal and neonatal adrenal gland development. Mechanistically, activates adenylate cyclase (cAMP), the MAPK cascade as well as the cAMP-dependent protein kinase A pathway leading to steroidogenic factor 1/NR5A1-mediated transcriptional activation. The chain is Adrenocorticotropic hormone receptor (MC2R) from Cavia porcellus (Guinea pig).